The chain runs to 361 residues: Peptide chain release factor 1 (361 aa).

Position 233 is an N5-methylglutamine (Q233). Basic and acidic residues predominate over residues 280–293; sequence ERRKKEQERADSRR. The tract at residues 280-307 is disordered; the sequence is ERRKKEQERADSRRGQVGSGDRSERIRT.

It belongs to the prokaryotic/mitochondrial release factor family. Post-translationally, methylated by PrmC. Methylation increases the termination efficiency of RF1.

The protein localises to the cytoplasm. In terms of biological role, peptide chain release factor 1 directs the termination of translation in response to the peptide chain termination codons UAG and UAA. This Rickettsia massiliae (strain Mtu5) protein is Peptide chain release factor 1.